Reading from the N-terminus, the 404-residue chain is MKAAAKRISDGVYWTGVLDWDLRNYHGYTLQGTTYNAYLVCGDEGVALIDNSYPGTFDELMARVEDALQQVGMERVDYIIQNHVEKDHSGVLVELHRRFPEAPIYCTEVAVKGLLKHYPSLREAEFMTVKTGDVLDLGGKTLTFLETPLLHWPDSMFTLLDEDGILFSNDAFGQHLCCPQRLDREIPEYILMDAARKFYANLITPLSKLVLKKFDEVKELGLLERIQMIAPSHGQIWTDPMKIIEAYTGWATGMVDERVTVIYDTMHGSTRKMAHAIAEGAMSEGVDVRVYCLHEDDRSEIVKDILESGAIALGAPTIYDEPYPSVGDLLMYLRGLKFNRTLTRKALVFGSMGGNGGATGTMKELLAEAGFDVACEEEVYYVPTGDELDACFEAGRKLAAEIRR.

Fe cation-binding residues include H83, E85, D87, H88, H151, D170, and H233. The 141-residue stretch at 259–399 (VTVIYDTMHG…ACFEAGRKLA (141 aa)) folds into the Flavodoxin-like domain. Residues 265-270 (TMHGST), 317-320 (TIYD), and 351-356 (SMGGNG) contribute to the FMN site.

It in the N-terminal section; belongs to the zinc metallo-hydrolase group 3 family. Homodimer. Homotetramer. The tetramer is composed of two functional dimers. It depends on FMN as a cofactor. The cofactor is Fe cation.

The catalysed reaction is 2 reduced coenzyme F420-(gamma-L-Glu)(n) + O2 = 2 oxidized coenzyme F420-(gamma-L-Glu)(n) + 2 H2O + 2 H(+). In terms of biological role, catalyzes the oxidation of F420H(2) with O(2). May be involved in O(2) detoxification, reducing the intracellular O(2) concentration to a level allowing growth at the expense of methane formation. The protein is Coenzyme F420H(2) oxidase of Methanothermobacter marburgensis (strain ATCC BAA-927 / DSM 2133 / JCM 14651 / NBRC 100331 / OCM 82 / Marburg) (Methanobacterium thermoautotrophicum).